The chain runs to 396 residues: Elongation factor Tu (396 aa).

The tr-type G domain occupies 10–206 (KPHVNVGTIG…ALDSYIPTPE (197 aa)). Residues 19–26 (GHVDHGKT) are G1. 19–26 (GHVDHGKT) is a binding site for GTP. Thr-26 is a Mg(2+) binding site. A G2 region spans residues 60 to 64 (GITIN). The interval 81–84 (DCPG) is G3. Residues 81–85 (DCPGH) and 136–139 (NKCD) each bind GTP. Residues 136–139 (NKCD) are G4. The interval 174–176 (SAK) is G5.

It belongs to the TRAFAC class translation factor GTPase superfamily. Classic translation factor GTPase family. EF-Tu/EF-1A subfamily. Monomer.

It localises to the cytoplasm. It carries out the reaction GTP + H2O = GDP + phosphate + H(+). Functionally, GTP hydrolase that promotes the GTP-dependent binding of aminoacyl-tRNA to the A-site of ribosomes during protein biosynthesis. In Herminiimonas arsenicoxydans, this protein is Elongation factor Tu.